The primary structure comprises 157 residues: 17.6 kDa class I heat shock protein 3 (157 aa).

A sHSP domain is found at aspartate 43–glycine 157.

Belongs to the small heat shock protein (HSP20) family. In terms of assembly, may form oligomeric structures.

The protein localises to the cytoplasm. In Arabidopsis thaliana (Mouse-ear cress), this protein is 17.6 kDa class I heat shock protein 3 (HSP17.6C).